Reading from the N-terminus, the 136-residue chain is Large ribosomal subunit protein eL27 (136 aa).

Positions 5 to 36 constitute a KOW domain; it reads MKPGKVVLVLRGKYAGRKAVVVKQQDEGVSDR.

It belongs to the eukaryotic ribosomal protein eL27 family. In terms of assembly, component of the large ribosomal subunit.

Its subcellular location is the cytoplasm. The protein resides in the cytosol. It localises to the rough endoplasmic reticulum. Component of the large ribosomal subunit. The sequence is that of Large ribosomal subunit protein eL27 (rpl-27) from Caenorhabditis elegans.